The primary structure comprises 301 residues: UDP-3-O-acyl-N-acetylglucosamine deacetylase (301 aa).

3 residues coordinate Zn(2+): histidine 75, histidine 233, and aspartate 237. Residue histidine 260 is the Proton donor of the active site.

Belongs to the LpxC family. It depends on Zn(2+) as a cofactor.

It carries out the reaction a UDP-3-O-[(3R)-3-hydroxyacyl]-N-acetyl-alpha-D-glucosamine + H2O = a UDP-3-O-[(3R)-3-hydroxyacyl]-alpha-D-glucosamine + acetate. Its pathway is glycolipid biosynthesis; lipid IV(A) biosynthesis; lipid IV(A) from (3R)-3-hydroxytetradecanoyl-[acyl-carrier-protein] and UDP-N-acetyl-alpha-D-glucosamine: step 2/6. Functionally, catalyzes the hydrolysis of UDP-3-O-myristoyl-N-acetylglucosamine to form UDP-3-O-myristoylglucosamine and acetate, the committed step in lipid A biosynthesis. In Aliarcobacter butzleri (strain RM4018) (Arcobacter butzleri), this protein is UDP-3-O-acyl-N-acetylglucosamine deacetylase.